A 123-amino-acid polypeptide reads, in one-letter code: Large ribosomal subunit protein uL14 (123 aa).

It belongs to the universal ribosomal protein uL14 family. As to quaternary structure, part of the 50S ribosomal subunit. Forms a cluster with proteins L3 and L19. In the 70S ribosome, L14 and L19 interact and together make contacts with the 16S rRNA in bridges B5 and B8.

Functionally, binds to 23S rRNA. Forms part of two intersubunit bridges in the 70S ribosome. This is Large ribosomal subunit protein uL14 from Sodalis glossinidius (strain morsitans).